The sequence spans 1695 residues: MQDGSLNGLSHHNDERVNHENEDKSLNTSALGDSPDSANRELIPSESKENGVPTDSIEGPPSKRRKLAGPDNSRRSTPRPPSPPWKKAGVDGPTSFLQDGKRRSSRVNAIPLELQPPSDKRKTRAAQRSTVNKNLSGNGKVVASSPLSMSVSQSGINGKHTGGNLTTGSPRTATPRGASARRRRISRSPPRQTPSRTRSQSSATSAPNDPTSHNARSKRSHSNVTSTPTIGIDELWNDIGGETDLGDEQGQRVPRLRIKVKKPVIGFQHPSHVIPPRKYNSFREWLESGEGRIEDGAVLTPEAALVEARKRCRVLEATEPGGLLSPEVCSAYLPEQQEEPPQQYSHQDHLVAHALYFKKLLDQEHRRHRNTARLLAQWCADAWRKRNKRPEDILREQQEEVRVKRKQLARDLQKMFDLARAEVDRMRLARWEEERKVEDQRALDRAIKQSTMLFEKRRLEILGETGSDFLDSTDAEESGTDATTSDAEEDESNMSSTDSETEDEDEVDDDEGLTAEELRQKYADLPQSSLVSDRESVASDTSESSDGTRTSHILQNIEDINDSQGETPLEQIELDEVDPMLLDDSEDESTDMDDDMGDSDEDGDADGTDSDDESDDGPGLLGFFSSKDRVLNDAHRFDDEGDDPLAVSNHEGGSGFDDDGQSVSVDEDGDEELEDADEVSLVPNGPSNSVSISQSTAEVSPVTETPDEEPDEQAEVVDTDMAAAAPSEGPAPLEASAPLEDLVAIDKRGDAMGECHRQQCSPLVNNLDEQELRQNGGASSEASPGTLATKPSEPESISSFEAPGEKPPQPSESPAPGLKTPIPHLLRGTLREYQHYGLDWLAGLYNNHINGILADEMGLGKTIQTIALLAHLAVEHEVWGPHLVVVPTSVILNWEMEFKKWCPGFKIMTYYGSIEERRQKRKGWTDDTSWNVLITSYQLVLQDQQVLKRRNWHYMVLDEAHNIKNFRSQKWQTLLTFRTRARLLLTGTPLQNNLTELWSLLFFLMPSDGDGTGIEGFADLRNFSEWFRRPVEQILEHGRETMDDETKRVVTKLHTILRPYILRRLKADVEKQMPAKYEHVVYCRLSKRQRFLYDGFMSMAQTKETLASGNYLSIINCLMQLRKVCNHPDLFETRQISTSFVMHHSVATEYASKEQLVRRRLLYEHPLTKLDLDFLNLVPISREDISRRLADDSTRLMAYGPFNILRERQYKRTNWQMMFDGSTVQSTLEALENDARKRRMAELERCLYFESKRHGRRPVYGTSLVEFLTADSKQKPTLGGRPQTQSLAEWLSNRSSILASMILSIEERSQAMDGYVRRFACVTPAAVASGITEAALTPIETRYLTEKERFPPYDPFHEAQMRLSIAFPDKRLLQYDCGKLQRLDKLLRDLKAGGHRALIFTQMTKMLDILEQFLNIHGHRYLRLDGTTKVEQRQILTDRFNNDDRILVFILSSRSGGLGINLTGADTVIFYDLDWNPAMDKQCQDRCHRIGQTRDVHIYRFVSEHTIESNILRKANQKRMLDDVVIQEGEFTTDYFTKLDVRDMIGEEAEAQDEASAAMDRVLSSRVATGGSRVFEQAEDKEDIDAAKNAQKEMEQADNDDFGDRSISHTPGQVGTPLATGPQEGETPGAQLITTPQIHGVDETVDVEPQPGHIDDYLLRFMEWNMKDEPLVLPPDKTKKKSKKGKEHRLSKRRR.

Positions 1-10 (MQDGSLNGLS) are enriched in polar residues. Residues 1–229 (MQDGSLNGLS…SHSNVTSTPT (229 aa)) are disordered. A compositionally biased stretch (basic and acidic residues) spans 11 to 25 (HHNDERVNHENEDKS). Composition is skewed to polar residues over residues 126-137 (AQRSTVNKNLSG) and 145-156 (SPLSMSVSQSGI). The span at 187-207 (RSPPRQTPSRTRSQSSATSAP) shows a compositional bias: low complexity. The HSA domain maps to 334–408 (PEQQEEPPQQ…EEVRVKRKQL (75 aa)). 2 disordered regions span residues 467-738 (SDFL…ASAP) and 772-821 (LRQN…LKTP). Over residues 499-514 (SETEDEDEVDDDEGLT) the composition is skewed to acidic residues. A compositionally biased stretch (polar residues) spans 538–554 (ASDTSESSDGTRTSHIL). Positions 572 to 616 (IELDEVDPMLLDDSEDESTDMDDDMGDSDEDGDADGTDSDDESDD) are enriched in acidic residues. Over residues 626–638 (SKDRVLNDAHRFD) the composition is skewed to basic and acidic residues. The segment covering 656–678 (FDDDGQSVSVDEDGDEELEDADE) has biased composition (acidic residues). The span at 685 to 697 (GPSNSVSISQSTA) shows a compositional bias: polar residues. Over residues 705–718 (TPDEEPDEQAEVVD) the composition is skewed to acidic residues. In terms of domain architecture, Helicase ATP-binding spans 842 to 1007 (AGLYNNHING…WSLLFFLMPS (166 aa)). 855-862 (DEMGLGKT) contributes to the ATP binding site. The DEAH box signature appears at 958 to 961 (DEAH). Residues 1382–1532 (RLDKLLRDLK…DVVIQEGEFT (151 aa)) form the Helicase C-terminal domain. Disordered regions lie at residues 1590-1625 (AQKE…PQEG) and 1669-1695 (EPLV…KRRR). The span at 1678–1695 (TKKKSKKGKEHRLSKRRR) shows a compositional bias: basic residues.

Belongs to the SNF2/RAD54 helicase family. SWR1 subfamily. In terms of assembly, component of the SWR1 chromatin-remodeling complex.

Its subcellular location is the nucleus. The catalysed reaction is ATP + H2O = ADP + phosphate + H(+). Catalytic component of the SWR1 complex which mediates the ATP-dependent exchange of histone H2A for the H2A variant HZT1 leading to transcriptional regulation of selected genes by chromatin remodeling. This chain is Helicase swr1 (swr1), found in Aspergillus fumigatus (strain ATCC MYA-4609 / CBS 101355 / FGSC A1100 / Af293) (Neosartorya fumigata).